The chain runs to 296 residues: Nucleotide-binding protein spr1424 (296 aa).

13–20 (GMGGAGKT) provides a ligand contact to ATP. Position 63 to 66 (63 to 66 (DMRS)) interacts with GTP.

This sequence belongs to the RapZ-like family.

Its function is as follows. Displays ATPase and GTPase activities. The polypeptide is Nucleotide-binding protein spr1424 (Streptococcus pneumoniae (strain ATCC BAA-255 / R6)).